Reading from the N-terminus, the 483-residue chain is Protein adenylyltransferase Fic (483 aa).

A helical transmembrane segment spans residues 20–42 (AFFFIAGSLATFVFHALTSSSSV). TPR repeat units follow at residues 107–140 (ALGA…APKH) and 141–175 (PEVL…SPSN). The Inhibitory (S/T)XXXE(G/N) motif signature appears at 232–237 (SVGIEG). ATP contacts are provided by residues glutamate 236 and 317-320 (VGGH). In terms of domain architecture, Fido spans 286–421 (ITLKDILELH…IRPFVRFIAD (136 aa)). Histidine 364 is an active-site residue. ATP contacts are provided by residues 368 to 375 (DGNGRTSR), 400 to 401 (YY), and asparagine 408. Positions 464–483 (SAPEPYESGSGLDSGVNGMP) are disordered.

Belongs to the fic family. In terms of assembly, homodimer.

It is found in the membrane. The catalysed reaction is L-tyrosyl-[protein] + ATP = O-(5'-adenylyl)-L-tyrosyl-[protein] + diphosphate. It carries out the reaction L-threonyl-[protein] + ATP = 3-O-(5'-adenylyl)-L-threonyl-[protein] + diphosphate. The enzyme catalyses 3-O-(5'-adenylyl)-L-threonyl-[protein] + H2O = L-threonyl-[protein] + AMP + H(+). With respect to regulation, the side chain of Glu-236 determines which of the two opposing activities (AMPylase or de-AMPylase) will take place. In response to endoplasmic reticulum stress, mediates de-AMPylase activity. Adenylyltransferase activity is inhibited by the inhibitory helix present at the N-terminus: Glu-236 binds ATP and competes with ATP-binding at Arg-375, thereby preventing adenylyltransferase activity. In unstressed cells, disengagement of Glu-236 promotes adenylyltransferase activity. Activation dissociates ATP-binding from Glu-236, allowing ordered binding of the entire ATP moiety with the alpha-phosphate in an orientation that is productive for accepting an incoming target hydroxyl side chain. Functionally, protein that can both mediate the addition of adenosine 5'-monophosphate (AMP) to specific residues of target proteins (AMPylation), and the removal of the same modification from target proteins (de-AMPylation), depending on the context. The side chain of Glu-236 determines which of the two opposing activities (AMPylase or de-AMPylase) will take place. Acts as a key regulator of the unfolded protein response (UPR) by mediating AMPylation or de-AMPylation of Hsc70-3/BiP. In unstressed cells, acts as an adenylyltransferase by mediating AMPylation of Hsc70-3/BiP at 'Thr-518', thereby inactivating it. In response to endoplasmic reticulum stress, acts as a phosphodiesterase by mediating removal of ATP (de-AMPylation) from Hsc70-3/BiP at 'Thr-518', leading to restore HSPA5/BiP activity. The polypeptide is Protein adenylyltransferase Fic (Drosophila grimshawi (Hawaiian fruit fly)).